Here is a 280-residue protein sequence, read N- to C-terminus: Phosphatidylserine decarboxylase proenzyme (280 aa).

Residues D88, H145, and S248 each act as charge relay system; for autoendoproteolytic cleavage activity in the active site. S248 functions as the Schiff-base intermediate with substrate; via pyruvic acid; for decarboxylase activity in the catalytic mechanism. Position 248 is a pyruvic acid (Ser); by autocatalysis (S248).

It belongs to the phosphatidylserine decarboxylase family. PSD-B subfamily. Prokaryotic type I sub-subfamily. In terms of assembly, heterodimer of a large membrane-associated beta subunit and a small pyruvoyl-containing alpha subunit. Requires pyruvate as cofactor. Post-translationally, is synthesized initially as an inactive proenzyme. Formation of the active enzyme involves a self-maturation process in which the active site pyruvoyl group is generated from an internal serine residue via an autocatalytic post-translational modification. Two non-identical subunits are generated from the proenzyme in this reaction, and the pyruvate is formed at the N-terminus of the alpha chain, which is derived from the carboxyl end of the proenzyme. The autoendoproteolytic cleavage occurs by a canonical serine protease mechanism, in which the side chain hydroxyl group of the serine supplies its oxygen atom to form the C-terminus of the beta chain, while the remainder of the serine residue undergoes an oxidative deamination to produce ammonia and the pyruvoyl prosthetic group on the alpha chain. During this reaction, the Ser that is part of the protease active site of the proenzyme becomes the pyruvoyl prosthetic group, which constitutes an essential element of the active site of the mature decarboxylase.

It localises to the cell membrane. It carries out the reaction a 1,2-diacyl-sn-glycero-3-phospho-L-serine + H(+) = a 1,2-diacyl-sn-glycero-3-phosphoethanolamine + CO2. It participates in phospholipid metabolism; phosphatidylethanolamine biosynthesis; phosphatidylethanolamine from CDP-diacylglycerol: step 2/2. Functionally, catalyzes the formation of phosphatidylethanolamine (PtdEtn) from phosphatidylserine (PtdSer). This is Phosphatidylserine decarboxylase proenzyme from Methylobacillus flagellatus (strain ATCC 51484 / DSM 6875 / VKM B-1610 / KT).